Here is a 1888-residue protein sequence, read N- to C-terminus: Fatty acid synthase subunit alpha (1888 aa).

The tract at residues 98–118 (DLAPVEEPNAEEQTGAAATPA) is disordered. The region spanning 146-221 (VKASLLLHVL…ETFQDTFAGS (76 aa)) is the Carrier domain. At serine 181 the chain carries O-(pantetheine 4'-phosphoryl)serine. Residues 675–874 (DKYVLITGAG…CGAIIGWTRG (200 aa)) are beta-ketoacyl reductase. The 539-residue stretch at 1119 to 1657 (KQMIQEVVIE…QKGAQAVAVH (539 aa)) folds into the Ketosynthase family 3 (KS3) domain. Active-site for beta-ketoacyl synthase activity residues include cysteine 1305, histidine 1542, and histidine 1583. Residues aspartate 1774, valine 1775, and glutamate 1776 each contribute to the Mg(2+) site. Residues 1774–1776 (DVE), tyrosine 1800, serine 1810, 1819–1829 (EAVFKSLGVKS), 1843–1846 (REAG), and 1873–1875 (ISH) each bind acetyl-CoA. Residues serine 1874 and histidine 1875 each contribute to the Mg(2+) site.

It belongs to the thiolase-like superfamily. Fungal fatty acid synthetase subunit alpha family. In terms of assembly, fatty acid synthase is composed of alpha and beta subunits.

It catalyses the reaction acetyl-CoA + n malonyl-CoA + 2n NADPH + 4n H(+) = a long-chain-acyl-CoA + n CoA + n CO2 + 2n NADP(+).. The enzyme catalyses a fatty acyl-[ACP] + malonyl-[ACP] + H(+) = a 3-oxoacyl-[ACP] + holo-[ACP] + CO2. The catalysed reaction is a (3R)-hydroxyacyl-[ACP] + NADP(+) = a 3-oxoacyl-[ACP] + NADPH + H(+). Functionally, fatty acid synthetase catalyzes the formation of long-chain fatty acids from acetyl-CoA, malonyl-CoA and NADPH. The alpha subunit contains domains for: acyl carrier protein, 3-oxoacyl-[acyl-carrier-protein] reductase, and 3-oxoacyl-[acyl-carrier-protein] synthase. In this species, higher amounts of C18 than C16 fatty acids are produced. The polypeptide is Fatty acid synthase subunit alpha (FAS2) (Lachancea kluyveri (Yeast)).